Reading from the N-terminus, the 466-residue chain is RUS family member 1 (466 aa).

Alanine 2 bears the N-acetylalanine mark. The chain crosses the membrane as a helical span at residues 245-265; that stretch reads LLMLPLVSDCLSLSLGCFILL.

The protein belongs to the RUS1 family.

The protein resides in the membrane. In Rattus norvegicus (Rat), this protein is RUS family member 1 (Rusf1).